A 408-amino-acid chain; its full sequence is Serine/threonine transporter SstT (408 aa).

Helical transmembrane passes span 19–39, 48–68, 86–106, 143–163, 193–213, 223–243, 294–314, 322–342, and 367–387; these read SLVS…VISP, LGSL…LVLV, IVGL…LLSF, VTAV…GLGF, FAPL…GFSA, VLLS…VFII, IPLG…VLTL, IEVS…SACG, and VAMQ…SAET.

Belongs to the dicarboxylate/amino acid:cation symporter (DAACS) (TC 2.A.23) family.

The protein localises to the cell inner membrane. The enzyme catalyses L-serine(in) + Na(+)(in) = L-serine(out) + Na(+)(out). It catalyses the reaction L-threonine(in) + Na(+)(in) = L-threonine(out) + Na(+)(out). Functionally, involved in the import of serine and threonine into the cell, with the concomitant import of sodium (symport system). This Colwellia psychrerythraea (strain 34H / ATCC BAA-681) (Vibrio psychroerythus) protein is Serine/threonine transporter SstT.